A 364-amino-acid polypeptide reads, in one-letter code: Aminomethyltransferase (364 aa).

The protein belongs to the GcvT family. As to quaternary structure, the glycine cleavage system is composed of four proteins: P, T, L and H.

The enzyme catalyses N(6)-[(R)-S(8)-aminomethyldihydrolipoyl]-L-lysyl-[protein] + (6S)-5,6,7,8-tetrahydrofolate = N(6)-[(R)-dihydrolipoyl]-L-lysyl-[protein] + (6R)-5,10-methylene-5,6,7,8-tetrahydrofolate + NH4(+). In terms of biological role, the glycine cleavage system catalyzes the degradation of glycine. The protein is Aminomethyltransferase of Shigella boydii serotype 18 (strain CDC 3083-94 / BS512).